A 224-amino-acid polypeptide reads, in one-letter code: Myogenin (224 aa).

Ser77 and Ser79 each carry phosphoserine; by CaMK2G. Residues Asp81–Leu132 enclose the bHLH domain. Thr87 carries the post-translational modification Phosphothreonine; by CaMK2G.

As to quaternary structure, homodimer and heterodimer with E12; heterodimerization enhances MYOG DNA-binding and transcriptional activities. Interacts with SMARCA4/BRG1/BAF190A. Interacts (via C-terminal region) with SSRP1 and SUPT16H; the interaction is indicative of an interaction with the FACT complex. Interacts with CSRP3. Phosphorylated by CAMK2G on threonine and serine amino acids in a muscle activity-dependent manner. Phosphorylation of Thr-87 impairs both DNA-binding and trans-activation functions in contracting muscles.

It is found in the nucleus. In terms of biological role, acts as a transcriptional activator that promotes transcription of muscle-specific target genes and plays a role in muscle differentiation, cell cycle exit and muscle atrophy. Essential for the development of functional embryonic skeletal fiber muscle differentiation. However is dispensable for postnatal skeletal muscle growth; phosphorylation by CAMK2G inhibits its transcriptional activity in respons to muscle activity. Required for the recruitment of the FACT complex to muscle-specific promoter regions, thus promoting gene expression initiation. During terminal myoblast differentiation, plays a role as a strong activator of transcription at loci with an open chromatin structure previously initiated by MYOD1. Together with MYF5 and MYOD1, co-occupies muscle-specific gene promoter core regions during myogenesis. Also cooperates with myocyte-specific enhancer factor MEF2D and BRG1-dependent recruitment of SWI/SNF chromatin-remodeling enzymes to alter chromatin structure at myogenic late gene promoters. Facilitates cell cycle exit during terminal muscle differentiation through the up-regulation of miR-20a expression, which in turn represses genes involved in cell cycle progression. Binds to the E-box containing (E1) promoter region of the miR-20a gene. Also plays a role in preventing reversal of muscle cell differentiation. Contributes to the atrophy-related gene expression in adult denervated muscles. Induces fibroblasts to differentiate into myoblasts. The chain is Myogenin (MYOG) from Homo sapiens (Human).